The chain runs to 445 residues: Phosphoglucosamine mutase (445 aa).

The active-site Phosphoserine intermediate is the S100. Mg(2+) contacts are provided by S100, D240, D242, and D244. The residue at position 100 (S100) is a Phosphoserine.

Belongs to the phosphohexose mutase family. The cofactor is Mg(2+). Activated by phosphorylation.

The catalysed reaction is alpha-D-glucosamine 1-phosphate = D-glucosamine 6-phosphate. Functionally, catalyzes the conversion of glucosamine-6-phosphate to glucosamine-1-phosphate. This chain is Phosphoglucosamine mutase, found in Pelotomaculum thermopropionicum (strain DSM 13744 / JCM 10971 / SI).